A 766-amino-acid polypeptide reads, in one-letter code: AMP deaminase 3 (766 aa).

A phosphoserine mark is found at Ser-85 and Ser-107. The interval 89-114 is disordered; the sequence is QMPTQQDWKGPPTASPAMSPATPLVP. A compositionally biased stretch (low complexity) spans 99 to 110; that stretch reads PPTASPAMSPAT. Residues His-316 and His-318 each contribute to the Zn(2+) site. Substrate is bound by residues His-318 and 387-392; that span reads KFNSKY. Position 585 (His-585) interacts with Zn(2+). A substrate-binding site is contributed by Glu-588. His-607 serves as the catalytic Proton acceptor. A Zn(2+)-binding site is contributed by Asp-662. Position 663–666 (663–666) interacts with substrate; that stretch reads DPMQ.

The protein belongs to the metallo-dependent hydrolases superfamily. Adenosine and AMP deaminases family. In terms of assembly, homotetramer. It depends on Zn(2+) as a cofactor. Found in heart, lung brain, spleen, kidney and to a lesser extent in liver.

It carries out the reaction AMP + H2O + H(+) = IMP + NH4(+). It functions in the pathway purine metabolism; IMP biosynthesis via salvage pathway; IMP from AMP: step 1/1. Its function is as follows. AMP deaminase plays a critical role in energy metabolism. The protein is AMP deaminase 3 of Mus musculus (Mouse).